The sequence spans 190 residues: Putative 3-methyladenine DNA glycosylase (190 aa).

This sequence belongs to the DNA glycosylase MPG family.

The polypeptide is Putative 3-methyladenine DNA glycosylase (Corynebacterium efficiens (strain DSM 44549 / YS-314 / AJ 12310 / JCM 11189 / NBRC 100395)).